We begin with the raw amino-acid sequence, 122 residues long: Small ribosomal subunit protein uS12 (122 aa).

The residue at position 89 (D89) is a 3-methylthioaspartic acid.

This sequence belongs to the universal ribosomal protein uS12 family. Part of the 30S ribosomal subunit. Contacts proteins S8 and S17. May interact with IF1 in the 30S initiation complex.

With S4 and S5 plays an important role in translational accuracy. Functionally, interacts with and stabilizes bases of the 16S rRNA that are involved in tRNA selection in the A site and with the mRNA backbone. Located at the interface of the 30S and 50S subunits, it traverses the body of the 30S subunit contacting proteins on the other side and probably holding the rRNA structure together. The combined cluster of proteins S8, S12 and S17 appears to hold together the shoulder and platform of the 30S subunit. This is Small ribosomal subunit protein uS12 from Neorickettsia sennetsu (strain ATCC VR-367 / Miyayama) (Ehrlichia sennetsu).